Reading from the N-terminus, the 341-residue chain is Spore photoproduct lyase (341 aa).

Residues S76–R304 form the Radical SAM core domain. [4Fe-4S] cluster contacts are provided by C90, C94, and C97. A DNA-binding region (H-T-H motif) is located at residues Q217 to A234.

The protein belongs to the radical SAM superfamily. SPL family. Monomer or homodimer. It depends on [4Fe-4S] cluster as a cofactor. The cofactor is S-adenosyl-L-methionine.

The catalysed reaction is (5R)-5,6-dihydro-5-(thymidin-7-yl)thymidine in DNA = a thymidine dimer in DNA. Its function is as follows. Involved in repair of UV radiation-induced DNA damage during spore germination. Can repair thymine dimer 5-thyminyl-5,6-dihydrothymine (known as spore photoproduct (SP)) by in situ monomerization of SP to two thymines. The chain is Spore photoproduct lyase (splG) from Geobacillus sp. (strain Y412MC61).